The primary structure comprises 497 residues: Arginine/ornithine antiporter ArcD2 (497 aa).

The next 13 helical transmembrane spans lie at 8–28, 41–61, 88–108, 127–147, 160–180, 220–240, 255–275, 297–317, 354–374, 378–398, 406–426, 429–449, and 462–482; these read GISL…GGVF, GGVV…VLSF, FLSG…FAVL, SLTI…MLLV, IVMI…IILF, IKGS…ATMM, VIGL…PYGY, VGGW…LGAW, LLIT…VANA, FIYM…AYLF, SVKN…ALYL, WQYV…FIGA, and WLGM…LICG.

The protein belongs to the amino acid-polyamine-organocation (APC) superfamily. Basic amino acid/polyamine antiporter (APA) (TC 2.A.3.2) family.

The protein resides in the cell membrane. The catalysed reaction is L-ornithine(in) + L-arginine(out) = L-ornithine(out) + L-arginine(in). In terms of biological role, catalyzes electroneutral exchange between L-arginine and L-ornithine. Can also efficiently translocate L-alanine. May function in vivo as a L-arginine/L-alanine exchanger in a pathway together with the arcT gene, which is found adjacent to the arcD2 gene in the ADI gene cluster. The chain is Arginine/ornithine antiporter ArcD2 from Lactococcus lactis subsp. cremoris (strain MG1363).